The chain runs to 418 residues: Glutamyl-tRNA reductase (418 aa).

Residues 49 to 52 (TCNR), S109, 114 to 116 (EPQ), and Q120 each bind substrate. Residue C50 is the Nucleophile of the active site. Residue 189–194 (GAGETI) participates in NADP(+) binding.

Belongs to the glutamyl-tRNA reductase family. In terms of assembly, homodimer.

The catalysed reaction is (S)-4-amino-5-oxopentanoate + tRNA(Glu) + NADP(+) = L-glutamyl-tRNA(Glu) + NADPH + H(+). It participates in porphyrin-containing compound metabolism; protoporphyrin-IX biosynthesis; 5-aminolevulinate from L-glutamyl-tRNA(Glu): step 1/2. Functionally, catalyzes the NADPH-dependent reduction of glutamyl-tRNA(Glu) to glutamate 1-semialdehyde (GSA). This chain is Glutamyl-tRNA reductase, found in Escherichia coli O157:H7.